A 152-amino-acid chain; its full sequence is UPF0178 protein KPN78578_03210 (152 aa).

Belongs to the UPF0178 family.

The chain is UPF0178 protein KPN78578_03210 from Klebsiella pneumoniae subsp. pneumoniae (strain ATCC 700721 / MGH 78578).